Here is a 356-residue protein sequence, read N- to C-terminus: Naringenin,2-oxoglutarate 3-dioxygenase (356 aa).

Positions 188–292 (CVDMDQKVVV…RLSIATFQNP (105 aa)) constitute a Fe2OG dioxygenase domain. The Fe cation site is built by His215, Asp217, and His273. Arg283 contributes to the 2-oxoglutarate binding site.

The protein belongs to the iron/ascorbate-dependent oxidoreductase family. Requires Fe(2+) as cofactor. It depends on L-ascorbate as a cofactor.

The catalysed reaction is a (2S)-flavan-4-one + 2-oxoglutarate + O2 = a (2R,3R)-dihydroflavonol + succinate + CO2. Its pathway is secondary metabolite biosynthesis; flavonoid biosynthesis. Its function is as follows. Catalyzes the 3-beta-hydroxylation of 2S-flavanones to 2R,3R-dihydroflavonols which are intermediates in the biosynthesis of flavonols, anthocyanidins, catechins and proanthocyanidins in plants. This chain is Naringenin,2-oxoglutarate 3-dioxygenase (FHT), found in Callistephus chinensis (China aster).